Consider the following 521-residue polypeptide: MAP kinase-activated protein kinase mak-1 (521 aa).

Residues 1–12 (MMFEYEEDEDPM) show a composition bias toward acidic residues. Residues 1 to 36 (MMFEYEEDEDPMEQQKHEEFKHHSTDHSGSPQENPF) form a disordered region. Positions 13 to 26 (EQQKHEEFKHHSTD) are enriched in basic and acidic residues. Residues 144–405 (TISAEIIGIG…IHELMATPLV (262 aa)) enclose the Protein kinase domain. ATP-binding positions include 150 to 158 (IGIGESGKV) and Lys-173. The Proton acceptor role is filled by Asp-266.

It belongs to the protein kinase superfamily. CAMK Ser/Thr protein kinase family. May interact (via protein kinase domain) with unc-22 (via protein kinase and CRD domains). The cofactor is Mg(2+). Post-translationally, autophosphorylated in vitro. Expressed in body wall muscles (at protein level). Expressed in intestine.

It localises to the cytoplasm. Its subcellular location is the myofibril. The protein localises to the sarcomere. It is found in the a band. It carries out the reaction L-seryl-[protein] + ATP = O-phospho-L-seryl-[protein] + ADP + H(+). The catalysed reaction is L-threonyl-[protein] + ATP = O-phospho-L-threonyl-[protein] + ADP + H(+). Serine/threonine-protein kinase which may play a role in body wall muscle contraction. May phosphorylate unc-22/twitchin. The protein is MAP kinase-activated protein kinase mak-1 of Caenorhabditis elegans.